A 368-amino-acid polypeptide reads, in one-letter code: Quinolinate synthase (368 aa).

Residues His-46 and Ser-63 each coordinate iminosuccinate. Residue Cys-110 coordinates [4Fe-4S] cluster. Residues 141 to 143 (YVN) and Ser-162 contribute to the iminosuccinate site. Cys-230 is a [4Fe-4S] cluster binding site. Iminosuccinate-binding positions include 256 to 258 (HPE) and Thr-273. Cys-320 serves as a coordination point for [4Fe-4S] cluster.

It belongs to the quinolinate synthase family. Type 3 subfamily. The cofactor is [4Fe-4S] cluster.

The protein localises to the cytoplasm. It catalyses the reaction iminosuccinate + dihydroxyacetone phosphate = quinolinate + phosphate + 2 H2O + H(+). It functions in the pathway cofactor biosynthesis; NAD(+) biosynthesis; quinolinate from iminoaspartate: step 1/1. Functionally, catalyzes the condensation of iminoaspartate with dihydroxyacetone phosphate to form quinolinate. The sequence is that of Quinolinate synthase from Bacillus cytotoxicus (strain DSM 22905 / CIP 110041 / 391-98 / NVH 391-98).